The sequence spans 81 residues: UPF0180 protein BLi01634/BL05144 (81 aa).

This sequence belongs to the UPF0180 family.

This is UPF0180 protein BLi01634/BL05144 from Bacillus licheniformis (strain ATCC 14580 / DSM 13 / JCM 2505 / CCUG 7422 / NBRC 12200 / NCIMB 9375 / NCTC 10341 / NRRL NRS-1264 / Gibson 46).